The following is a 193-amino-acid chain: Glycerol-3-phosphate acyltransferase (193 aa).

5 helical membrane-spanning segments follow: residues 2–22 (AFII…AVIV), 51–71 (QAAF…VLIA), 78–98 (GVSL…PVYF), 112–132 (VLLG…VIVV), and 154–174 (IIAG…LLIW).

This sequence belongs to the PlsY family. In terms of assembly, probably interacts with PlsX.

Its subcellular location is the cell inner membrane. The enzyme catalyses an acyl phosphate + sn-glycerol 3-phosphate = a 1-acyl-sn-glycero-3-phosphate + phosphate. It participates in lipid metabolism; phospholipid metabolism. Functionally, catalyzes the transfer of an acyl group from acyl-phosphate (acyl-PO(4)) to glycerol-3-phosphate (G3P) to form lysophosphatidic acid (LPA). This enzyme utilizes acyl-phosphate as fatty acyl donor, but not acyl-CoA or acyl-ACP. This Coxiella burnetii (strain CbuG_Q212) (Coxiella burnetii (strain Q212)) protein is Glycerol-3-phosphate acyltransferase.